The sequence spans 219 residues: MRSHISVMGKKEGMIHIFDKDGSLVACSVIRVEPNVVTQIKTKESDGYFSLQIGAEEMNAPAHTITKRVSKPKLGHLRKAGGRVFRFLKEVRGSEEALNGVSLGDAFGLEVFEDVSSVDVRGISKGKGFQGVMKKFGFRGGPGSHGSGFHRHAGSIGMRSTPGRCFPGSKRPSHMGAENVTVKNLEVIKVDLEKKVLLVKGAIPGARGSIVIVKHSSRT.

Belongs to the universal ribosomal protein uL3 family. In terms of assembly, part of the 50S ribosomal subunit. Forms a cluster with proteins L14 and L19.

Its function is as follows. One of the primary rRNA binding proteins, it binds directly near the 3'-end of the 23S rRNA, where it nucleates assembly of the 50S subunit. In Chlamydia pneumoniae (Chlamydophila pneumoniae), this protein is Large ribosomal subunit protein uL3.